The chain runs to 190 residues: Major sperm protein 32 (190 aa).

Positions 72-189 (MIQTQPGTKI…RRKNLPIEYN (118 aa)) constitute an MSP domain.

Sperm.

It is found in the cell projection. It localises to the pseudopodium. The protein resides in the cytoplasm. The protein localises to the cytoskeleton. Central component in molecular interactions underlying sperm crawling. Forms an extensive filament system that extends from sperm villipoda, along the leading edge of the pseudopod. The sequence is that of Major sperm protein 32 (msp-32) from Caenorhabditis elegans.